Reading from the N-terminus, the 339-residue chain is MGTRQTKGSLAERASPGAAPGPRRERPDFWASLLLRAGDKAGRAGSGLPPYHRRVGMVQELLRMVRQGRREEAGTLLQHLRQDLGMESTSLDDVLYRYASFRNLVDPITHDLIISLARYIHCPKPEGDAMGAMEKLCRQLTYHLSPHSQWRRHRGLKRKPQACLKALLSGNPPDNMVDLSGIPLTSRDLERVTSYLQRCGEQVDSVELGFTGLTDDMVLQLLPALSTLPRLTTLALNGNRLTRALLRDLTDTLKDPSKFPNVTWIDLGNNVDIFSLPQPFLLSLRKRSPKQGHLPTILELGEGPGTGEEAREGTDQQDPIGSPVTPARGQESTECVIQT.

Positions 1 to 25 are disordered; the sequence is MGTRQTKGSLAERASPGAAPGPRRE. Residues 11-21 are compositionally biased toward low complexity; sequence AERASPGAAPG. LRR repeat units follow at residues 203–216 and 228–241; these read VDSVELGFTGLTDD and LPRLTTLALNGNRL. The disordered stretch occupies residues 294–339; sequence LPTILELGEGPGTGEEAREGTDQQDPIGSPVTPARGQESTECVIQT. Residue Ser-322 is modified to Phosphoserine. Thr-325 is subject to Phosphothreonine. Positions 330-339 are enriched in polar residues; the sequence is QESTECVIQT.

It belongs to the LRRC75 family.

This is Leucine-rich repeat-containing protein 75A (Lrrc75a) from Mus musculus (Mouse).